The sequence spans 326 residues: Thioredoxin reductase (326 aa).

40 to 47 (TGNNKGGQ) is an FAD binding site. The cysteines at positions 141 and 144 are disulfide-linked. 291–300 (DVIDHVYKQA) is a binding site for FAD.

Belongs to the class-II pyridine nucleotide-disulfide oxidoreductase family. As to quaternary structure, homodimer. The cofactor is FAD.

It localises to the cytoplasm. The catalysed reaction is [thioredoxin]-dithiol + NADP(+) = [thioredoxin]-disulfide + NADPH + H(+). The chain is Thioredoxin reductase (trxB) from Buchnera aphidicola subsp. Baizongia pistaciae (strain Bp).